The primary structure comprises 101 residues: Small ribosomal subunit protein uS14 (101 aa).

The interval 1–25 (MAKVSAIQKNKSRQKKSQRLHNKRS) is disordered. Residues 10 to 25 (NKSRQKKSQRLHNKRS) are compositionally biased toward basic residues.

This sequence belongs to the universal ribosomal protein uS14 family. Part of the 30S ribosomal subunit. Contacts proteins S3 and S10.

Binds 16S rRNA, required for the assembly of 30S particles and may also be responsible for determining the conformation of the 16S rRNA at the A site. The protein is Small ribosomal subunit protein uS14 of Rickettsia typhi (strain ATCC VR-144 / Wilmington).